We begin with the raw amino-acid sequence, 239 residues long: Ribonuclease 3 (239 aa).

In terms of domain architecture, RNase III spans 18–141 (YTTLEKALGY…LMAGVYLEAG (124 aa)). E54 contacts Mg(2+). D58 is an active-site residue. Positions 127 and 130 each coordinate Mg(2+). E130 is an active-site residue. Positions 168 to 237 (DYKTALQELT…AYYALQKLKE (70 aa)) constitute a DRBM domain.

It belongs to the ribonuclease III family. As to quaternary structure, homodimer. Requires Mg(2+) as cofactor.

The protein resides in the cytoplasm. It catalyses the reaction Endonucleolytic cleavage to 5'-phosphomonoester.. Digests double-stranded RNA. Involved in the processing of primary rRNA transcript to yield the immediate precursors to the large and small rRNAs (23S and 16S). Processes some mRNAs, and tRNAs when they are encoded in the rRNA operon. Processes pre-crRNA and tracrRNA of type II CRISPR loci if present in the organism. This Helicobacter pylori (strain G27) protein is Ribonuclease 3.